A 637-amino-acid chain; its full sequence is Chaperone protein HtpG (637 aa).

An a; substrate-binding region spans residues 1–345 (MSQQETHGFQ…SNDLPLNVSR (345 aa)). The b stretch occupies residues 346 to 562 (EILQDNQVTT…EGEMSTQMIK (217 aa)). The c stretch occupies residues 563–637 (LMQAAGQAVP…MNQMLLANAK (75 aa)).

It belongs to the heat shock protein 90 family. Homodimer.

The protein localises to the cytoplasm. Its function is as follows. Molecular chaperone. Has ATPase activity. The sequence is that of Chaperone protein HtpG from Shewanella denitrificans (strain OS217 / ATCC BAA-1090 / DSM 15013).